We begin with the raw amino-acid sequence, 447 residues long: Peptide-N(4)-(N-acetyl-beta-glucosaminyl)asparagine amidase (447 aa).

Zn(2+) contacts are provided by Cys209, Cys212, Cys241, and Cys244. Cys267 (nucleophile) is an active-site residue. Residues His294 and Asp311 contribute to the active site.

The protein belongs to the transglutaminase-like superfamily. PNGase family. Zn(2+) is required as a cofactor.

It is found in the cytoplasm. It catalyses the reaction Hydrolysis of an N(4)-(acetyl-beta-D-glucosaminyl)asparagine residue in which the glucosamine residue may be further glycosylated, to yield a (substituted) N-acetyl-beta-D-glucosaminylamine and a peptide containing an aspartate residue.. In terms of biological role, specifically deglycosylates the denatured form of N-linked glycoproteins in the cytoplasm and assists their proteasome-mediated degradation. Cleaves the beta-aspartyl-glucosamine (GlcNAc) of the glycan and the amide side chain of Asn, converting Asn to Asp. Prefers proteins containing high-mannose over those bearing complex type oligosaccharides. Can recognize misfolded proteins in the endoplasmic reticulum that are exported to the cytosol to be destroyed and deglycosylate them, while it has no activity toward native proteins. Deglycosylation is a prerequisite for subsequent proteasome-mediated degradation of some, but not all, misfolded glycoproteins. The protein is Peptide-N(4)-(N-acetyl-beta-glucosaminyl)asparagine amidase (PNG1) of Oryza sativa subsp. japonica (Rice).